The sequence spans 265 residues: MRFTVTSRGDDVSNTLQQKIKRYLLDFGLTLDEQEPDIVITVGGDGTLLHAFHRYTSRLEDTAFVGIHTGHLGFYADWVPDEVEKLVIHIAKTPYQIVEYPLLEVVVRHTDESESKRLLALNECTVKSQEGSLVSNVEIKGDVFEVFRGDGLCISTPSGSTAYNKALGGAILHPSLASIQISEMASINNRVYRTIGSPLVLPQHHTCLIKPLNQVELQVTIDHFTLAYKRVKSIQCRVAEEKIRFARFRPFPFWKRVKESFIGDS.

D45 serves as the catalytic Proton acceptor. NAD(+)-binding positions include 45 to 46 (DG), H50, 122 to 123 (NE), R148, D150, and A185.

Belongs to the NAD kinase family. Requires a divalent metal cation as cofactor.

It localises to the cytoplasm. The enzyme catalyses NAD(+) + ATP = ADP + NADP(+) + H(+). In terms of biological role, involved in the regulation of the intracellular balance of NAD and NADP, and is a key enzyme in the biosynthesis of NADP. Catalyzes specifically the phosphorylation on 2'-hydroxyl of the adenosine moiety of NAD to yield NADP. This chain is NAD kinase 1, found in Halalkalibacterium halodurans (strain ATCC BAA-125 / DSM 18197 / FERM 7344 / JCM 9153 / C-125) (Bacillus halodurans).